The following is a 144-amino-acid chain: Ribonuclease H (144 aa).

One can recognise an RNase H type-1 domain in the interval 1–136 (MKIVTLFSDG…CDQMARNEAL (136 aa)). The Mg(2+) site is built by Asp-9, Glu-47, Asp-69, and Asp-128.

This sequence belongs to the RNase H family. As to quaternary structure, monomer. It depends on Mg(2+) as a cofactor.

It is found in the cytoplasm. It carries out the reaction Endonucleolytic cleavage to 5'-phosphomonoester.. In terms of biological role, endonuclease that specifically degrades the RNA of RNA-DNA hybrids. The chain is Ribonuclease H from Campylobacter concisus (strain 13826).